We begin with the raw amino-acid sequence, 512 residues long: Maturase K (512 aa).

This sequence belongs to the intron maturase 2 family. MatK subfamily.

Its subcellular location is the plastid. It is found in the chloroplast. Functionally, usually encoded in the trnK tRNA gene intron. Probably assists in splicing its own and other chloroplast group II introns. This Lilium regale (Regal lily) protein is Maturase K.